A 561-amino-acid chain; its full sequence is Oligo-1,6-glucosidase (561 aa).

Asp199 serves as the catalytic Nucleophile. Catalysis depends on Glu256, which acts as the Proton donor.

It belongs to the glycosyl hydrolase 13 family.

The protein localises to the cytoplasm. The enzyme catalyses Hydrolysis of (1-&gt;6)-alpha-D-glucosidic linkages in some oligosaccharides produced from starch and glycogen by alpha-amylase, and in isomaltose.. The protein is Oligo-1,6-glucosidase (malL) of Halalkalibacterium halodurans (strain ATCC BAA-125 / DSM 18197 / FERM 7344 / JCM 9153 / C-125) (Bacillus halodurans).